A 442-amino-acid chain; its full sequence is Probable protein phosphatase 2C 15 (442 aa).

Residues 35–303 enclose the PPM-type phosphatase domain; sequence AAERPELQVG…DDTTCIVVDI (269 aa). Residues aspartate 80, glycine 81, aspartate 255, and aspartate 294 each contribute to the Mn(2+) site. Residues 420–434 are compositionally biased toward basic and acidic residues; that stretch reads KKEAMEGKRRSRDSS. The interval 420 to 442 is disordered; that stretch reads KKEAMEGKRRSRDSSSRNSGSSE.

The protein belongs to the PP2C family. It depends on Mg(2+) as a cofactor. Mn(2+) is required as a cofactor.

The catalysed reaction is O-phospho-L-seryl-[protein] + H2O = L-seryl-[protein] + phosphate. It catalyses the reaction O-phospho-L-threonyl-[protein] + H2O = L-threonyl-[protein] + phosphate. The protein is Probable protein phosphatase 2C 15 of Oryza sativa subsp. japonica (Rice).